Here is a 378-residue protein sequence, read N- to C-terminus: Putative methyltransferase spot-1 (378 aa).

The protein belongs to the class IV-like SAM-binding methyltransferase superfamily.

The protein localises to the cytoplasm. The protein resides in the cytoskeleton. It is found in the spindle. It localises to the chromosome. Its subcellular location is the centromere. The protein localises to the kinetochore. The protein resides in the microtubule organizing center. It is found in the centrosome. Required for association of the centrosomes with the poles of the bipolar mitotic spindle during metaphase. The chain is Putative methyltransferase spot-1 from Caenorhabditis elegans.